Reading from the N-terminus, the 110-residue chain is MKQLIRRLSRVADSTQYSLLRSESQRGRTKKEKHKSWVPEGHVPVYVGHEMERFVVNAELLNHPVFVALLKQSAQEYGYEQQGVLRIPCHVLVFERILESLRLGLADRVT.

This sequence belongs to the ARG7 family. As to expression, highly expressed in the steles of roots and hypocotyls.

It localises to the cytoplasm. Functionally, plays a role in the regulation of cell expansion, root meristem patterning and auxin transport. The polypeptide is Auxin-responsive protein SAUR71 (Arabidopsis thaliana (Mouse-ear cress)).